We begin with the raw amino-acid sequence, 526 residues long: Nucleolar complex protein 4 homolog A (526 aa).

A run of 3 helical transmembrane segments spans residues 307 to 327 (AAYD…FILI), 358 to 378 (FFHL…LVAA), and 386 to 406 (LALT…CNLI).

Belongs to the CBF/MAK21 family.

Its subcellular location is the nucleus membrane. The protein localises to the nucleus. The protein resides in the nucleolus. This chain is Nucleolar complex protein 4 homolog A (noc4l-a), found in Xenopus laevis (African clawed frog).